The chain runs to 232 residues: Thiamine import ATP-binding protein ThiQ (232 aa).

An ABC transporter domain is found at 2–230; that stretch reads LKLTDITWLY…KASASAILGI (229 aa). Residue 32 to 39 coordinates ATP; the sequence is GPSGAGKS.

This sequence belongs to the ABC transporter superfamily. Thiamine importer (TC 3.A.1.19.1) family. The complex is composed of two ATP-binding proteins (ThiQ), two transmembrane proteins (ThiP) and a solute-binding protein (ThiB).

The protein localises to the cell inner membrane. The catalysed reaction is thiamine(out) + ATP + H2O = thiamine(in) + ADP + phosphate + H(+). Part of the ABC transporter complex ThiBPQ involved in thiamine import. Responsible for energy coupling to the transport system. The polypeptide is Thiamine import ATP-binding protein ThiQ (Shigella flexneri serotype 5b (strain 8401)).